Here is a 505-residue protein sequence, read N- to C-terminus: Putative pentatricopeptide repeat-containing protein At1g26500 (505 aa).

PPR repeat units follow at residues 145-179, 180-210, 214-248, 249-279, 285-319, 320-350, and 351-385; these read NDKT…GYLY, NVET…LKEF, DEIT…GFDV, DIEA…MVSK, DGGF…GVYV, DNLT…VENP, and DISI…GCEP.

The protein belongs to the PPR family. P subfamily.

The chain is Putative pentatricopeptide repeat-containing protein At1g26500 from Arabidopsis thaliana (Mouse-ear cress).